The sequence spans 402 residues: Putative RNA-guided DNA endonuclease (402 aa).

D188 is an active-site residue. A disordered region spans residues 202–239 (KITNPKHERRDRARLAKAQRDVSRKAKGSANRKKARRK). Over residues 204 to 225 (TNPKHERRDRARLAKAQRDVSR) the composition is skewed to basic and acidic residues. The segment covering 226 to 239 (KAKGSANRKKARRK) has biased composition (basic residues). The active site involves E272. Zn(2+)-binding residues include C325, C328, C344, and C346. D353 is a catalytic residue. A disordered region spans residues 373-402 (GIRPQRESSRTGRSSVKQEPQRATAGIPRL).

The protein in the N-terminal section; belongs to the transposase 2 family. In the C-terminal section; belongs to the transposase 35 family.

Functionally, an RNA-guided dsDNA endonuclease. When guided by an RNA derived from the right-end element of its insertion sequence element (IS), cleaves DNA downstream of the transposon-associated motif (TAM). Cleaves supercoiled and linear DNA in a staggered manner 15-21 bases from the TAM yielding 5'-overhangs. Binds reRNA, an approximately 150 nucleotide base sRNA derived from the 3' end of its own gene, the right end (RE) of the insertion sequence (IS) plus sequence downstream of the IS. This chain is Putative RNA-guided DNA endonuclease, found in Streptomyces pristinaespiralis.